The primary structure comprises 97 residues: Small ribosomal subunit protein bS18c (97 aa).

This sequence belongs to the bacterial ribosomal protein bS18 family. As to quaternary structure, part of the 30S ribosomal subunit.

It localises to the plastid. It is found in the chloroplast. In Oenothera glazioviana (Large-flowered evening primrose), this protein is Small ribosomal subunit protein bS18c.